A 249-amino-acid polypeptide reads, in one-letter code: Secretion system apparatus lipoprotein SsaJ (249 aa).

The first 18 residues, 1–18, serve as a signal peptide directing secretion; that stretch reads MKVHRIVFLTVLTFFLTA. The N-palmitoyl cysteine moiety is linked to residue Cys19. The S-diacylglycerol cysteine moiety is linked to residue Cys19. Residues 225–245 traverse the membrane as a helical segment; the sequence is LMLSLTGLLLGVGILIGYFCL.

Belongs to the YscJ lipoprotein family.

The protein resides in the cell outer membrane. Functionally, component of Salmonella pathogenicity island 2 (SPI-2) type III secretion system, required for secretion of some type III-secreted effectors including the SpvB exotoxin. In Salmonella typhimurium (strain 14028s / SGSC 2262), this protein is Secretion system apparatus lipoprotein SsaJ (ssaJ).